The chain runs to 219 residues: 2,3-bisphosphoglycerate-dependent phosphoglycerate mutase 2 (219 aa).

Substrate contacts are provided by residues 8–15 (RHGQSIWN), 21–22 (TG), arginine 58, 85–88 (ERHY), lysine 96, 112–113 (RR), and 156–157 (GN). The active-site Tele-phosphohistidine intermediate is histidine 9. The active-site Proton donor/acceptor is glutamate 85.

The protein belongs to the phosphoglycerate mutase family. BPG-dependent PGAM subfamily.

The catalysed reaction is (2R)-2-phosphoglycerate = (2R)-3-phosphoglycerate. The protein operates within carbohydrate degradation; glycolysis; pyruvate from D-glyceraldehyde 3-phosphate: step 3/5. In terms of biological role, catalyzes the interconversion of 2-phosphoglycerate and 3-phosphoglycerate. The polypeptide is 2,3-bisphosphoglycerate-dependent phosphoglycerate mutase 2 (Gloeobacter violaceus (strain ATCC 29082 / PCC 7421)).